Here is a 215-residue protein sequence, read N- to C-terminus: MMKMCRYALITALAIFLAGCAGLREQPAPVEEAKPQPQQPAQPQPTVPTVPAVPSVPAQPGPIEHQDQQSGQPAPRVRHYDWNGAVQPLVGQMLQASGVNAGSILLVDSVNNRTNGSLNAGEATTALRSALAGNGKFTLVSAQQLAVAKQQLGLSPQDSLGSRSKAMGIARNVGAQYVLYSNATGNVNAPELKMQLMLVQTGEIIWSGKGAVQQQ.

Positions 1–19 are cleaved as a signal peptide; that stretch reads MMKMCRYALITALAIFLAG. C20 is lipidated: N-palmitoyl cysteine. The S-diacylglycerol cysteine moiety is linked to residue C20. Residues 28-78 are disordered; that stretch reads APVEEAKPQPQQPAQPQPTVPTVPAVPSVPAQPGPIEHQDQQSGQPAPRVR. The span at 37–48 shows a compositional bias: pro residues; sequence PQQPAQPQPTVP. Over residues 49-58 the composition is skewed to low complexity; the sequence is TVPAVPSVPA.

It belongs to the LpoB family. Interacts with PBP1b.

Its subcellular location is the cell outer membrane. Regulator of peptidoglycan synthesis that is essential for the function of penicillin-binding protein 1B (PBP1b). This chain is Penicillin-binding protein activator LpoB, found in Klebsiella pneumoniae subsp. pneumoniae (strain ATCC 700721 / MGH 78578).